Here is a 394-residue protein sequence, read N- to C-terminus: MVEPASPDSDEGISLLEFHGNGDRSWQLNFDDFQVSPEHKEKKSPSKLHNCLGCLGPEDNVADYYQQQVEMLEGFTEMDELAERGFVPGMSKEEQDNLAKSETLAIRISNIANMLLFAAKVYASVTSGSLAIIASTLDSLLDLLSGFILWFTAFSMQTPNPYQYPIGKKRMQPLGILVFASVMATLGLQIILESLRTMLSSHKEFNLTKEQESWVVGIMLSVTLVKLLLVLYCRSFTNEIVKAYAQDHFFDVITNIIGLIAVILANYIDYWIDPVGAIILALYTIRTWSMTVLENVNSLVGKSARPEYLQKLTYLCWNHHKAIRHIDTVRAYTFGSHYFVEVDIVLPADMPLQVAHDIGESLQEKLELLEEIERAFVHLDYEYTHKPEHARSHC.

The Cytoplasmic portion of the chain corresponds to 1–103; the sequence is MVEPASPDSD…EQDNLAKSET (103 aa). The helical transmembrane segment at 104–124 threads the bilayer; the sequence is LAIRISNIANMLLFAAKVYAS. The Vacuolar segment spans residues 125–130; sequence VTSGSL. Residues 131-151 traverse the membrane as a helical segment; sequence AIIASTLDSLLDLLSGFILWF. Residues 152–172 lie on the Cytoplasmic side of the membrane; that stretch reads TAFSMQTPNPYQYPIGKKRMQ. Residues 173–193 form a helical membrane-spanning segment; sequence PLGILVFASVMATLGLQIILE. At 194–212 the chain is on the vacuolar side; it reads SLRTMLSSHKEFNLTKEQE. The chain crosses the membrane as a helical span at residues 213 to 233; it reads SWVVGIMLSVTLVKLLLVLYC. Residues 234–251 are Cytoplasmic-facing; the sequence is RSFTNEIVKAYAQDHFFD. A helical membrane pass occupies residues 252 to 272; that stretch reads VITNIIGLIAVILANYIDYWI. A topological domain (vacuolar) is located at residue D273. The helical transmembrane segment at 274–294 threads the bilayer; it reads PVGAIILALYTIRTWSMTVLE. The Cytoplasmic segment spans residues 295 to 394; sequence NVNSLVGKSA…HKPEHARSHC (100 aa).

Belongs to the cation diffusion facilitator (CDF) transporter (TC 2.A.4) family. SLC30A subfamily. Widely expressed.

Its subcellular location is the prevacuolar compartment membrane. It localises to the golgi apparatus membrane. Functionally, cation/proton antiporter involved in endogenous manganese tolerance probably through vesicular trafficking and exocytosis. The sequence is that of Metal tolerance protein 11 (MTP11) from Arabidopsis thaliana (Mouse-ear cress).